Here is a 444-residue protein sequence, read N- to C-terminus: Tubulin beta-7 chain (444 aa).

GTP is bound by residues Q11, E69, S138, G142, T143, G144, N204, and N226. E69 is a Mg(2+) binding site.

It belongs to the tubulin family. Dimer of alpha and beta chains. A typical microtubule is a hollow water-filled tube with an outer diameter of 25 nm and an inner diameter of 15 nM. Alpha-beta heterodimers associate head-to-tail to form protofilaments running lengthwise along the microtubule wall with the beta-tubulin subunit facing the microtubule plus end conferring a structural polarity. Microtubules usually have 13 protofilaments but different protofilament numbers can be found in some organisms and specialized cells. Requires Mg(2+) as cofactor. In terms of tissue distribution, expressed in roots, leaf sheaths, and suspension cultured cells.

The protein localises to the cytoplasm. The protein resides in the cytoskeleton. Functionally, tubulin is the major constituent of microtubules, a cylinder consisting of laterally associated linear protofilaments composed of alpha- and beta-tubulin heterodimers. Microtubules grow by the addition of GTP-tubulin dimers to the microtubule end, where a stabilizing cap forms. Below the cap, tubulin dimers are in GDP-bound state, owing to GTPase activity of alpha-tubulin. The chain is Tubulin beta-7 chain (TUBB7) from Oryza sativa subsp. japonica (Rice).